Reading from the N-terminus, the 313-residue chain is tRNA dimethylallyltransferase (313 aa).

11–18 (GPTACGKT) contributes to the ATP binding site. A substrate-binding site is contributed by 13 to 18 (TACGKT). Interaction with substrate tRNA stretches follow at residues 36-39 (DSAL), 160-164 (QRIGR), and 243-248 (RCVGYR).

The protein belongs to the IPP transferase family. In terms of assembly, monomer. The cofactor is Mg(2+).

It carries out the reaction adenosine(37) in tRNA + dimethylallyl diphosphate = N(6)-dimethylallyladenosine(37) in tRNA + diphosphate. In terms of biological role, catalyzes the transfer of a dimethylallyl group onto the adenine at position 37 in tRNAs that read codons beginning with uridine, leading to the formation of N6-(dimethylallyl)adenosine (i(6)A). The sequence is that of tRNA dimethylallyltransferase from Neisseria gonorrhoeae (strain ATCC 700825 / FA 1090).